A 192-amino-acid polypeptide reads, in one-letter code: UPF0301 protein Rru_A3059 (192 aa).

This sequence belongs to the UPF0301 (AlgH) family.

The sequence is that of UPF0301 protein Rru_A3059 from Rhodospirillum rubrum (strain ATCC 11170 / ATH 1.1.1 / DSM 467 / LMG 4362 / NCIMB 8255 / S1).